Consider the following 216-residue polypeptide: Octanoyltransferase (216 aa).

The region spanning 33 to 216 (AQTADELWIV…AEKLTRHLSG (184 aa)) is the BPL/LPL catalytic domain. Substrate contacts are provided by residues 72–79 (RGGEVTYH), 148–150 (ALG), and 162–164 (GVS). The active-site Acyl-thioester intermediate is Cys180.

The protein belongs to the LipB family.

Its subcellular location is the cytoplasm. It catalyses the reaction octanoyl-[ACP] + L-lysyl-[protein] = N(6)-octanoyl-L-lysyl-[protein] + holo-[ACP] + H(+). Its pathway is protein modification; protein lipoylation via endogenous pathway; protein N(6)-(lipoyl)lysine from octanoyl-[acyl-carrier-protein]: step 1/2. In terms of biological role, catalyzes the transfer of endogenously produced octanoic acid from octanoyl-acyl-carrier-protein onto the lipoyl domains of lipoate-dependent enzymes. Lipoyl-ACP can also act as a substrate although octanoyl-ACP is likely to be the physiological substrate. The protein is Octanoyltransferase of Herminiimonas arsenicoxydans.